Here is a 211-residue protein sequence, read N- to C-terminus: Proteasome subunit beta (211 aa).

The propeptide at 1-9 (MDNDKYLKG) is removed in mature form; by autocatalysis. Thr10 acts as the Nucleophile in catalysis.

This sequence belongs to the peptidase T1B family. The 20S proteasome core is composed of 14 alpha and 14 beta subunits that assemble into four stacked heptameric rings, resulting in a barrel-shaped structure. The two inner rings, each composed of seven catalytic beta subunits, are sandwiched by two outer rings, each composed of seven alpha subunits. The catalytic chamber with the active sites is on the inside of the barrel. Has a gated structure, the ends of the cylinder being occluded by the N-termini of the alpha-subunits. Is capped at one or both ends by the proteasome regulatory ATPase, PAN.

Its subcellular location is the cytoplasm. It catalyses the reaction Cleavage of peptide bonds with very broad specificity.. Its activity is regulated as follows. The formation of the proteasomal ATPase PAN-20S proteasome complex, via the docking of the C-termini of PAN into the intersubunit pockets in the alpha-rings, triggers opening of the gate for substrate entry. Interconversion between the open-gate and close-gate conformations leads to a dynamic regulation of the 20S proteasome proteolysis activity. Functionally, component of the proteasome core, a large protease complex with broad specificity involved in protein degradation. The chain is Proteasome subunit beta from Methanosarcina barkeri (strain Fusaro / DSM 804).